Consider the following 155-residue polypeptide: Snaclec agkicetin-C subunit alpha (155 aa).

Positions 1-23 (MGRFIFVSFGLLVVFLSLSGTAA) are cleaved as a signal peptide. Disulfide bonds link Cys25–Cys36, Cys53–Cys149, and Cys124–Cys141. In terms of domain architecture, C-type lectin spans 32 to 150 (YIRFCYQPFK…CGLKHVFMCK (119 aa)).

The protein belongs to the snaclec family. Heterodimer of subunits alpha and beta; disulfide-linked. Expressed by the venom gland.

Its subcellular location is the secreted. Functionally, is a potent glycoprotein Ibalpha (GP1BA) antagonist. Concentration-dependently inhibits botrocetin-, ristocetin- and low dose thrombin-induced platelet aggregation. Inhibits platelet adhesion only through inhibiting the vWF interaction with GP1BA, but has minimal effect on other platelet receptors, such as alpha-IIb/beta-3 (ITGA2B/ITGB3) or alpha-2/beta-1 (ITGA2/ITGB1). Causes an instant severe thrombocytopenia in rats and is not lethal to mice. The polypeptide is Snaclec agkicetin-C subunit alpha (Deinagkistrodon acutus (Hundred-pace snake)).